Reading from the N-terminus, the 390-residue chain is Dual-specificity RNA methyltransferase RlmN (390 aa).

Glu-110 functions as the Proton acceptor in the catalytic mechanism. The Radical SAM core domain occupies 116–355 (EADRATLCVS…VIIRKTRGDD (240 aa)). An intrachain disulfide couples Cys-123 to Cys-360. Residues Cys-130, Cys-134, and Cys-137 each contribute to the [4Fe-4S] cluster site. Residues 184–185 (GE), Ser-216, 238–240 (SLH), and Asn-317 each bind S-adenosyl-L-methionine. Cys-360 acts as the S-methylcysteine intermediate in catalysis.

This sequence belongs to the radical SAM superfamily. RlmN family. [4Fe-4S] cluster serves as cofactor.

It localises to the cytoplasm. It catalyses the reaction adenosine(2503) in 23S rRNA + 2 reduced [2Fe-2S]-[ferredoxin] + 2 S-adenosyl-L-methionine = 2-methyladenosine(2503) in 23S rRNA + 5'-deoxyadenosine + L-methionine + 2 oxidized [2Fe-2S]-[ferredoxin] + S-adenosyl-L-homocysteine. It carries out the reaction adenosine(37) in tRNA + 2 reduced [2Fe-2S]-[ferredoxin] + 2 S-adenosyl-L-methionine = 2-methyladenosine(37) in tRNA + 5'-deoxyadenosine + L-methionine + 2 oxidized [2Fe-2S]-[ferredoxin] + S-adenosyl-L-homocysteine. In terms of biological role, specifically methylates position 2 of adenine 2503 in 23S rRNA and position 2 of adenine 37 in tRNAs. m2A2503 modification seems to play a crucial role in the proofreading step occurring at the peptidyl transferase center and thus would serve to optimize ribosomal fidelity. In Haemophilus influenzae (strain 86-028NP), this protein is Dual-specificity RNA methyltransferase RlmN.